The primary structure comprises 440 residues: Acetylornithine deacetylase (440 aa).

His-101 serves as a coordination point for Zn(2+). Asp-103 is a catalytic residue. Residue Asp-133 participates in Zn(2+) binding. The active-site Proton acceptor is the Glu-167. Zn(2+)-binding residues include Glu-168 and His-412.

This sequence belongs to the peptidase M20A family. ArgE subfamily. Homodimer. Zn(2+) serves as cofactor. Requires Co(2+) as cofactor.

It carries out the reaction N(2)-acetyl-L-ornithine + H2O = L-ornithine + acetate. It participates in amino-acid biosynthesis; L-arginine biosynthesis; L-ornithine from N(2)-acetyl-L-ornithine (linear): step 1/1. The protein is Acetylornithine deacetylase of Arabidopsis thaliana (Mouse-ear cress).